The following is a 448-amino-acid chain: Tubulin alpha-4A chain (448 aa).

The MREC motif signature appears at 1–4; that stretch reads MREC. Position 11 (glutamine 11) interacts with GTP. The residue at position 40 (lysine 40) is an N6-acetyllysine. Serine 48 is modified (phosphoserine). Glutamate 71 contacts GTP. Mg(2+) is bound at residue glutamate 71. Tyrosine 83 carries the 3'-nitrotyrosine modification. GTP is bound by residues serine 140, glycine 144, threonine 145, threonine 179, asparagine 206, and asparagine 228. Glutamate 254 is a catalytic residue. Residue tyrosine 432 is modified to Phosphotyrosine. A Phosphoserine modification is found at serine 439.

It belongs to the tubulin family. In terms of assembly, dimer of alpha and beta chains. A typical microtubule is a hollow water-filled tube with an outer diameter of 25 nm and an inner diameter of 15 nM. Alpha-beta heterodimers associate head-to-tail to form protofilaments running lengthwise along the microtubule wall with the beta-tubulin subunit facing the microtubule plus end conferring a structural polarity. Microtubules usually have 13 protofilaments but different protofilament numbers can be found in some organisms and specialized cells. Interacts with CFAP157. The cofactor is Mg(2+). Some glutamate residues at the C-terminus are polyglycylated, resulting in polyglycine chains on the gamma-carboxyl group. Glycylation is mainly limited to tubulin incorporated into axonemes (cilia and flagella) whereas glutamylation is prevalent in neuronal cells, centrioles, axonemes, and the mitotic spindle. Both modifications can coexist on the same protein on adjacent residues, and lowering polyglycylation levels increases polyglutamylation, and reciprocally. Cilia and flagella glycylation is required for their stability and maintenance. Flagella glycylation controls sperm motility. In terms of processing, some glutamate residues at the C-terminus are polyglutamylated, resulting in polyglutamate chains on the gamma-carboxyl group. Polyglutamylation plays a key role in microtubule severing by spastin (SPAST). SPAST preferentially recognizes and acts on microtubules decorated with short polyglutamate tails: severing activity by SPAST increases as the number of glutamates per tubulin rises from one to eight, but decreases beyond this glutamylation threshold. Glutamylation is also involved in cilia motility. Post-translationally, acetylation of alpha chains at Lys-40 is located inside the microtubule lumen. This modification has been correlated with increased microtubule stability, intracellular transport and ciliary assembly. Methylation of alpha chains at Lys-40 is found in mitotic microtubules and is required for normal mitosis and cytokinesis contributing to genomic stability. In terms of processing, although this tubulin does not encode a C-terminal tyrosine, a C-terminal tyrosine can be added post-translationally by the tubulin tyrosine ligase (TTL). It can then undergo a detyrosination cycle by the tubulin tyrosine carboxypeptidase (MATCAP1/KIAA0895L).

The protein localises to the cytoplasm. The protein resides in the cytoskeleton. It catalyses the reaction GTP + H2O = GDP + phosphate + H(+). Functionally, tubulin is the major constituent of microtubules, a cylinder consisting of laterally associated linear protofilaments composed of alpha- and beta-tubulin heterodimers. Microtubules grow by the addition of GTP-tubulin dimers to the microtubule end, where a stabilizing cap forms. Below the cap, tubulin dimers are in GDP-bound state, owing to GTPase activity of alpha-tubulin. This chain is Tubulin alpha-4A chain (TUBA4A), found in Macaca fascicularis (Crab-eating macaque).